Consider the following 59-residue polypeptide: Probable stress-associated endoplasmic reticulum protein (59 aa).

Residues 1–30 (MSQSRTLRQKSQKYQENIEKRGVASPKKKE) are disordered. Residues 1 to 34 (MSQSRTLRQKSQKYQENIEKRGVASPKKKEDGLN) lie on the Cytoplasmic side of the membrane. Basic and acidic residues predominate over residues 16–30 (ENIEKRGVASPKKKE). A helical; Anchor for type IV membrane protein transmembrane segment spans residues 35–55 (INPYVLGFIIFVVVGSTLLQI). Topologically, residues 56–59 (LKGQ) are extracellular.

The protein belongs to the RAMP4 family.

It localises to the membrane. Its subcellular location is the endoplasmic reticulum membrane. May interact with target proteins during translocation into the lumen of the endoplasmic reticulum. May protect unfolded target proteins against degradation and facilitate correct glycosylation. This Dictyostelium discoideum (Social amoeba) protein is Probable stress-associated endoplasmic reticulum protein (serp).